The primary structure comprises 79 residues: Calcium/calmodulin-dependent protein kinase II inhibitor 2 (79 aa).

Positions 1–21 (MSEILPYSEDKMGRFGADPEG) are disordered. Positions 43–69 (KRPPKLGQIGRAKRVVIEDDRIDDVLK) are inhibitory domain.

Belongs to the CAMK2N family. In terms of assembly, interacts with CAMK2A and CAMK2B in the presence of Ca(2+)/calmodulin or after autophosphorylation.

The protein localises to the nucleus. The protein resides in the cytoplasm. It is found in the cytosol. It localises to the synapse. Potent and specific cellular inhibitor of CaM-kinase II (CAMK2). Traps Ca(2+)/calmodulin on CAMK2. This Bos taurus (Bovine) protein is Calcium/calmodulin-dependent protein kinase II inhibitor 2 (CAMK2N2).